Reading from the N-terminus, the 574-residue chain is Phosphatidylinositol 4-kinase gamma 3 (574 aa).

Ubiquitin-like domains lie at 32 to 109 (PILV…SDLQ) and 110 to 188 (AISV…AKVR). Residues 257-555 (GNGPIRSSDG…IVPTETTEDE (299 aa)) enclose the PI3K/PI4K catalytic domain. The segment at 263-269 (SSDGSGG) is G-loop. Residues 264 to 270 (SDGSGGA), K286, and 381 to 384 (QMFV) each bind ATP. Residues 414 to 422 (ANADRHAGN) form a catalytic loop region. The interval 438 to 464 (PIDHGYCFPNKFEDCTFEWLYWPQAKE) is activation loop. An ATP-binding site is contributed by D440.

This sequence belongs to the PI3/PI4-kinase family. Type II PI4K subfamily.

It carries out the reaction a 1,2-diacyl-sn-glycero-3-phospho-(1D-myo-inositol) + ATP = a 1,2-diacyl-sn-glycero-3-phospho-(1D-myo-inositol 4-phosphate) + ADP + H(+). The phosphorylation of phosphatidylinositol (PI) to PI4P is the first committed step in the generation of phosphatidylinositol 4,5-bisphosphate (PIP2), a precursor of the second messenger inositol 1,4,5-trisphosphate (InsP3). In Arabidopsis thaliana (Mouse-ear cress), this protein is Phosphatidylinositol 4-kinase gamma 3 (PI4KG3).